The sequence spans 106 residues: Iron-sulfur cluster assembly protein CyaY (106 aa).

This sequence belongs to the frataxin family.

Its function is as follows. Involved in iron-sulfur (Fe-S) cluster assembly. May act as a regulator of Fe-S biogenesis. This chain is Iron-sulfur cluster assembly protein CyaY, found in Salmonella agona (strain SL483).